Consider the following 286-residue polypeptide: Formamidopyrimidine-DNA glycosylase (286 aa).

Residue Pro-2 is the Schiff-base intermediate with DNA of the active site. Glu-3 acts as the Proton donor in catalysis. Lys-61 functions as the Proton donor; for beta-elimination activity in the catalytic mechanism. Residues His-103, Arg-122, and Arg-164 each contribute to the DNA site. The FPG-type zinc-finger motif lies at 250–284 (NAYGQTGEPCGRCGTQIVRENFMNRGSHYCPNCQK). The active-site Proton donor; for delta-elimination activity is the Arg-274.

The protein belongs to the FPG family. In terms of assembly, monomer. Zn(2+) is required as a cofactor.

The catalysed reaction is Hydrolysis of DNA containing ring-opened 7-methylguanine residues, releasing 2,6-diamino-4-hydroxy-5-(N-methyl)formamidopyrimidine.. It carries out the reaction 2'-deoxyribonucleotide-(2'-deoxyribose 5'-phosphate)-2'-deoxyribonucleotide-DNA = a 3'-end 2'-deoxyribonucleotide-(2,3-dehydro-2,3-deoxyribose 5'-phosphate)-DNA + a 5'-end 5'-phospho-2'-deoxyribonucleoside-DNA + H(+). Functionally, involved in base excision repair of DNA damaged by oxidation or by mutagenic agents. Acts as a DNA glycosylase that recognizes and removes damaged bases. Has a preference for oxidized purines, such as 7,8-dihydro-8-oxoguanine (8-oxoG). Has AP (apurinic/apyrimidinic) lyase activity and introduces nicks in the DNA strand. Cleaves the DNA backbone by beta-delta elimination to generate a single-strand break at the site of the removed base with both 3'- and 5'-phosphates. The sequence is that of Formamidopyrimidine-DNA glycosylase from Corynebacterium glutamicum (strain R).